The sequence spans 128 residues: Small ribosomal subunit protein uS11 (128 aa).

Belongs to the universal ribosomal protein uS11 family. As to quaternary structure, part of the 30S ribosomal subunit. Interacts with proteins S7 and S18. Binds to IF-3.

Functionally, located on the platform of the 30S subunit, it bridges several disparate RNA helices of the 16S rRNA. Forms part of the Shine-Dalgarno cleft in the 70S ribosome. The polypeptide is Small ribosomal subunit protein uS11 (Leuconostoc mesenteroides subsp. mesenteroides (strain ATCC 8293 / DSM 20343 / BCRC 11652 / CCM 1803 / JCM 6124 / NCDO 523 / NBRC 100496 / NCIMB 8023 / NCTC 12954 / NRRL B-1118 / 37Y)).